A 100-amino-acid chain; its full sequence is Aspartyl/glutamyl-tRNA(Asn/Gln) amidotransferase subunit C (100 aa).

It belongs to the GatC family. In terms of assembly, heterotrimer of A, B and C subunits.

It catalyses the reaction L-glutamyl-tRNA(Gln) + L-glutamine + ATP + H2O = L-glutaminyl-tRNA(Gln) + L-glutamate + ADP + phosphate + H(+). The enzyme catalyses L-aspartyl-tRNA(Asn) + L-glutamine + ATP + H2O = L-asparaginyl-tRNA(Asn) + L-glutamate + ADP + phosphate + 2 H(+). Its function is as follows. Allows the formation of correctly charged Asn-tRNA(Asn) or Gln-tRNA(Gln) through the transamidation of misacylated Asp-tRNA(Asn) or Glu-tRNA(Gln) in organisms which lack either or both of asparaginyl-tRNA or glutaminyl-tRNA synthetases. The reaction takes place in the presence of glutamine and ATP through an activated phospho-Asp-tRNA(Asn) or phospho-Glu-tRNA(Gln). The chain is Aspartyl/glutamyl-tRNA(Asn/Gln) amidotransferase subunit C from Streptococcus uberis (strain ATCC BAA-854 / 0140J).